A 393-amino-acid polypeptide reads, in one-letter code: Tryptophan 2,3-dioxygenase (393 aa).

Substrate-binding positions include 56-60 (FIVTH) and Arg127. Heme is bound at residue His312. Residue Thr327 coordinates substrate.

The protein belongs to the tryptophan 2,3-dioxygenase family. As to quaternary structure, homotetramer. Dimer of dimers. It depends on heme as a cofactor.

The enzyme catalyses L-tryptophan + O2 = N-formyl-L-kynurenine. It participates in amino-acid degradation; L-tryptophan degradation via kynurenine pathway; L-kynurenine from L-tryptophan: step 1/2. Its pathway is pigment biosynthesis; ommochrome biosynthesis. With respect to regulation, stimulated by low concentrations of hydrogen peroxide (5 uM), ascorbate (0.1-0.3 mM), and sodium hydrosulfite (0.1 mM). Inhibited by high concentrations of hydrogen peroxide (0.1 mM), ascorbate (10 mM), and sodium hydrosulfite (1 mM). Its function is as follows. Heme-dependent dioxygenase that catalyzes the oxidative cleavage of the L-tryptophan (L-Trp) pyrrole ring and converts L-tryptophan to N-formyl-L-kynurenine. Catalyzes the oxidative cleavage of the indole moiety. This Aedes aegypti (Yellowfever mosquito) protein is Tryptophan 2,3-dioxygenase.